Consider the following 449-residue polypeptide: MSEIVVSKFGGTSVADFDAMNRSADIVLSDANVRLVVLSASAGITNLLVALAEGLEPGERFEKLDAIRNIQFAILERLRYPNVIREEIERLLENITVLAEAAALATSPALTDELVSHGELMSTLLFVEILRERDVQAQWFDVRKVMRTNDRFGRAEPDIAALAELAALQLLPRLNEGLVITQGFIGSENKGRTTTLGRGGSDYTAALLAEALHASRVDIWTDVPGIYTTDPRVVSAAKRIDEIAFAEAAEMATFGAKVLHPATLLPAVRSDIPVFVGSSKDPRAGGTLVCNKTENPPLFRALALRRNQTLLTLHSLNMLHSRGFLAEVFGILARHNISVDLITTSEVSVALTLDTTGSTSTGDTLLTQSLLMELSALCRVEVEEGLALVALIGNDLSKACGVGKEVFGVLEPFNIRMICYGASSHNLCFLVPGEDAEQVVQKLHSNLFE.

Positions S2–F245 are aspartokinase. Residue K8 to G11 coordinates ATP. Substrate-binding positions include T45, E119, and R198–S201. Residues T221–D222, Y227, R232, and K257–V258 contribute to the ATP site. The segment at A246 to E449 is interface. A required for homodimerization region spans residues F299–E449. One can recognise an ACT domain in the interval L313–N394. L-lysine is bound by residues M318, S321, F324 to L325, S338 to D340, and S345 to E346.

It belongs to the aspartokinase family. As to quaternary structure, homodimer. In the inactive form a homotetramer is formed.

The catalysed reaction is L-aspartate + ATP = 4-phospho-L-aspartate + ADP. It functions in the pathway amino-acid biosynthesis; L-lysine biosynthesis via DAP pathway; (S)-tetrahydrodipicolinate from L-aspartate: step 1/4. With respect to regulation, synthesis and activity are sensitive to the allosteric inhibitor lysine, one of the end metabolites of the aspartic acid family branched pathway. This chain is Lysine-sensitive aspartokinase 3 (lysC), found in Escherichia coli (strain K12).